A 147-amino-acid polypeptide reads, in one-letter code: Hemoglobin subunit gamma (147 aa).

The region spanning 3–147 (NFTAEDKAAI…VASALGSRYH (145 aa)) is the Globin domain. Positions 64 and 93 each coordinate heme b.

Belongs to the globin family. As to quaternary structure, heterotetramer of two alpha chains and two gamma chains in fetal hemoglobin (Hb F). Red blood cells.

Functionally, gamma chains make up the fetal hemoglobin F, in combination with alpha chains. The protein is Hemoglobin subunit gamma (HBG) of Aotus azarae (Azara's night monkey).